Consider the following 296-residue polypeptide: NADH-cytochrome b5 reductase 1 (296 aa).

A helical transmembrane segment spans residues 11 to 31; sequence LSAVLVKFAPFAVAVIAILAA. Residues 47 to 152 enclose the FAD-binding FR-type domain; it reads SEFQNFVLKE…RGPKGAMVYT (106 aa). FAD is bound by residues 132–147 and 158–195; these read TTLK…GPKG and HIGM…KIDL.

Belongs to the flavoprotein pyridine nucleotide cytochrome reductase family. As to quaternary structure, monomer. Component of the 2-(3-amino-3-carboxypropyl)histidine synthase complex composed of dph1, dph2, dph3 and a NADH-dependent reductase, predominantly cbr1. It depends on FAD as a cofactor.

It localises to the mitochondrion outer membrane. The catalysed reaction is 2 Fe(III)-[cytochrome b5] + NADH = 2 Fe(II)-[cytochrome b5] + NAD(+) + H(+). It carries out the reaction 2 Fe(3+)-[Dph3] + NADH = 2 Fe(2+)-[Dph3] + NAD(+) + H(+). It participates in protein modification; peptidyl-diphthamide biosynthesis. NADH-dependent reductase for dph3 and cytochrome b5. Required for the first step of diphthamide biosynthesis, a post-translational modification of histidine which occurs in elongation factor 2. Dph1 and dph2 transfer a 3-amino-3-carboxypropyl (ACP) group from S-adenosyl-L-methionine (SAM) to a histidine residue, the reaction is assisted by a reduction system comprising dph3 and a NADH-dependent reductase, predominantly cbr1. By reducing dph3, also involved in the formation of the tRNA wobble base modification mcm5s 2U (5-methoxycarbonylmethyl-2-thiouridine), mediated by the elongator complex. The cytochrome b5/NADH cytochrome b5 reductase electron transfer system supports the catalytic activity of several sterol biosynthetic enzymes. The protein is NADH-cytochrome b5 reductase 1 (cbr1) of Aspergillus terreus (strain NIH 2624 / FGSC A1156).